A 224-amino-acid polypeptide reads, in one-letter code: Transposase for insertion sequence element IS257 in transposon Tn4003 (224 aa).

The H-T-H motif DNA-binding region spans 33–52 (EILRGRGVNVHHSTVYRWVQ). An Integrase catalytic domain is found at 73–222 (WRIDETYIKI…SPCHEISIML (150 aa)).

Involved in the transposition of the insertion sequence. This is Transposase for insertion sequence element IS257 in transposon Tn4003 from Staphylococcus aureus.